We begin with the raw amino-acid sequence, 335 residues long: Acetyl-coenzyme A carboxylase carboxyl transferase subunit alpha (335 aa).

The region spanning Q40–T294 is the CoA carboxyltransferase C-terminal domain.

The protein belongs to the AccA family. In terms of assembly, acetyl-CoA carboxylase is a heterohexamer composed of biotin carboxyl carrier protein (AccB), biotin carboxylase (AccC) and two subunits each of ACCase subunit alpha (AccA) and ACCase subunit beta (AccD).

Its subcellular location is the cytoplasm. It catalyses the reaction N(6)-carboxybiotinyl-L-lysyl-[protein] + acetyl-CoA = N(6)-biotinyl-L-lysyl-[protein] + malonyl-CoA. It participates in lipid metabolism; malonyl-CoA biosynthesis; malonyl-CoA from acetyl-CoA: step 1/1. Its function is as follows. Component of the acetyl coenzyme A carboxylase (ACC) complex. First, biotin carboxylase catalyzes the carboxylation of biotin on its carrier protein (BCCP) and then the CO(2) group is transferred by the carboxyltransferase to acetyl-CoA to form malonyl-CoA. This Prochlorococcus marinus (strain MIT 9312) protein is Acetyl-coenzyme A carboxylase carboxyl transferase subunit alpha.